The sequence spans 613 residues: Carotenoid dioxygenase (613 aa).

Positions 1 to 25 are disordered; the sequence is MSPHEVIGTVPKNSTTFRTQADEHD. The Fe(2+) site is built by His261, His313, His383, and His595.

The protein belongs to the carotenoid oxygenase family. Fe(2+) serves as cofactor.

It is found in the cytoplasm. It localises to the cytosol. It carries out the reaction torulene + O2 = 4'-apo-beta-carotenal + 3-methyl-2-butenal. It functions in the pathway carotenoid biosynthesis. Functionally, torulene dioxygenase; part of pathway that mediates the biosynthesis of neurosporaxanthin, a carboxylic apocarotenoid acting as an essential protective pigments and leading to orange pigmentation. Cao-2 mediates the cleavage of torulene into beta-apo-4'-carotenal, the aldehyde corresponding to the acidic neurosporaxanthin. Is not able to use gamma-carotene (that it is not desaturated at the C4'-C5' bond) as substrate, which suggests a high specificity of cao-2 in cleaving the C4'-C5' double bond. Neurosporaxanthin is synthesized from geranyl-geranyl pyrophosphate (GGPP) through several enzymatic activities. Phytoene synthase activity performed by the bifunctional enzyme al-2 first produces phytoene from geranyl-geranyl pyrophosphate (GGPP). The phytoene dehydrogenase al-1 then introduces 5 desaturations to lead to 3,4-didehydrolycopene via the intermediates phytofluene, zeta-carotene, neurosporene and lycopene. Al-2 cyclase activity then converts 3,4-didehydrolycopene into torulene. Al-2 can also convet lycopene into gamma-carotene which in turn is converted to beta-carotene by an additional al-2 cyclization reaction. Torulene is the substrate of the dioxidase cao-2 that breaks the molecule, removing five carbon atoms to yield beta-apo-4'-carotenal, whereas the aldehyde dehydrogenase ylo-1 mediates the last step by converting beta-apo-4'-carotenal into neurosporaxanthin. This chain is Carotenoid dioxygenase, found in Neurospora crassa (strain ATCC 24698 / 74-OR23-1A / CBS 708.71 / DSM 1257 / FGSC 987).